The following is a 317-amino-acid chain: MSKTHQKVVLIGDGAVGSSYAFAMVQQGLAQEFAIIDLNKKRTEGDALDLEDATPFTAPKLVYGADYDTCKDADLVVITAGAPQKPGETRLDLVDKNLKIIKSVVEPVVKSGFQGIFLVAANPVDILTYAVQKFSGFPRNKVVGSGTSLDSARLRVGLSKLFNVSPVDVNANMMAEHGDTEFAAFSSATIGGLPLYDLAEAKGISKDDLYKLEDDVRNKAYAIINSKGATFYGVATALMRISRAILRDENAVLPVGAPMSGEYGLKDIYIGTPAVINANGIAEVLEVPLDEREAKAMADSAKTLEEIAKNGMAKIQG.

NAD(+) contacts are provided by residues Val-16, Asp-37, Arg-42, Tyr-67, and Gly-81 to Ala-82. The substrate site is built by Gln-84 and Arg-90. Residues Ser-103, Ala-120–Asn-122, and Ser-145 contribute to the NAD(+) site. Asn-122–Asp-125 contributes to the substrate binding site. Asp-150–Arg-153 serves as a coordination point for substrate. His-177 serves as the catalytic Proton acceptor. Tyr-221 bears the Phosphotyrosine mark. Thr-230 contributes to the substrate binding site.

This sequence belongs to the LDH/MDH superfamily. LDH family. As to quaternary structure, homotetramer.

It is found in the cytoplasm. It carries out the reaction (S)-lactate + NAD(+) = pyruvate + NADH + H(+). The protein operates within fermentation; pyruvate fermentation to lactate; (S)-lactate from pyruvate: step 1/1. Its function is as follows. Catalyzes the conversion of lactate to pyruvate. The sequence is that of L-lactate dehydrogenase from Limosilactobacillus fermentum (strain NBRC 3956 / LMG 18251) (Lactobacillus fermentum).